We begin with the raw amino-acid sequence, 87 residues long: Small ribosomal subunit protein bS20 (87 aa).

Residues 1 to 11 (MANIKSAKKRA) are compositionally biased toward basic residues. The interval 1–27 (MANIKSAKKRAVQSEKRRQHNASQRSM) is disordered.

Belongs to the bacterial ribosomal protein bS20 family.

Its function is as follows. Binds directly to 16S ribosomal RNA. This chain is Small ribosomal subunit protein bS20, found in Haemophilus influenzae (strain PittEE).